A 319-amino-acid polypeptide reads, in one-letter code: Transcriptional regulator LsrR (319 aa).

The segment at residues 32–55 is a DNA-binding region (H-T-H motif); it reads QSEISERLGLTRLKVSRLLEKGHQ.

This sequence belongs to the SorC transcriptional regulatory family.

The protein resides in the cytoplasm. Inactivated by phosphorylated autoinducer-2 (phospho-AI-2). Phospho-AI-2 acts by binding to LsrR, which is then unable to bind to the promoter regions, allowing the transcription of the target genes. In terms of biological role, transcriptional regulator that represses the expression of the lsr operon (lsrACDBFGE) in the absence of the quorum-sensing signaling molecule autoinducer 2 (AI-2). It also represses the expression of the lsrRK operon. Acts by binding to the intergenic region between the lsr operon and lsrR. In the presence of phosphorylated autoinducer-2 (phospho-AI-2), LsrR is inactivated, leading to the transcription of the genes. The regulatory function of LsrR was thought to be limited to the lsr operon, but it was subsequently shown to be involved, directly or indirectly, in the regulation of SPI-1 and flagella genes. It negatively regulates the expression of those genes, which reduces the ability of Salmonella to invade host cells. In Salmonella typhimurium (strain LT2 / SGSC1412 / ATCC 700720), this protein is Transcriptional regulator LsrR.